Reading from the N-terminus, the 426-residue chain is Protein trichome birefringence-like 19 (426 aa).

The chain crosses the membrane as a helical; Signal-anchor for type II membrane protein span at residues 15–35 (LLIAVTIATSLLTIIPLLYPL). Positions 142-144 (GDS) match the GDS motif motif. Positions 388-402 (DCVHWCLPGPIDNLN) match the DCXHWCLPGXXDXWN motif motif.

The protein belongs to the PC-esterase family. TBL subfamily.

The protein localises to the membrane. Functionally, may act as a bridging protein that binds pectin and other cell wall polysaccharides. Probably involved in maintaining esterification of pectins. May be involved in the specific O-acetylation of cell wall polymers. In Arabidopsis thaliana (Mouse-ear cress), this protein is Protein trichome birefringence-like 19 (TBL19).